The chain runs to 117 residues: Large ribosomal subunit protein bL20 (117 aa).

The protein belongs to the bacterial ribosomal protein bL20 family.

Functionally, binds directly to 23S ribosomal RNA and is necessary for the in vitro assembly process of the 50S ribosomal subunit. It is not involved in the protein synthesizing functions of that subunit. The chain is Large ribosomal subunit protein bL20 from Wigglesworthia glossinidia brevipalpis.